Consider the following 425-residue polypeptide: Terminal nucleotidyltransferase 5B (425 aa).

A disordered region spans residues 1-42 (MMPSESGAERRDRAAAQVGTAAATAVATAAPAGGGPDPEALS). The segment covering 15-31 (AAQVGTAAATAVATAAP) has biased composition (low complexity).

This sequence belongs to the TENT family.

The protein resides in the cytoplasm. Its subcellular location is the nucleus. The enzyme catalyses RNA(n) + ATP = RNA(n)-3'-adenine ribonucleotide + diphosphate. Its function is as follows. Catalyzes the transfer of one adenosine molecule from an ATP to an mRNA poly(A) tail bearing a 3'-OH terminal group in an ATP hydrolysis-dependent manner. May be involved in maintaining the translation efficiency of at least some genes through preventing degradation of their mRNAs. Prefers RNA molecules that are adenosine-rich close to 3'-end. In addition, may inhibit cell proliferation and cell cycle progression through ubiquitination of beta-catenin/CTNNB1. The polypeptide is Terminal nucleotidyltransferase 5B (Homo sapiens (Human)).